The chain runs to 296 residues: Phosphatidylcholine:diacylglycerol cholinephosphotransferase 2 (296 aa).

The next 5 membrane-spanning stretches (helical) occupy residues 83-103 (HWIP…EYTF), 136-156 (VLAA…GCTW), 165-182 (TIAA…GYST), 198-218 (PVGN…SMIA), and 250-270 (GHYT…DSLA). Residues His211, His251, and Asp255 contribute to the active site.

It belongs to the phosphatidylcholine:diacylglycerol cholinephosphotransferase family.

Its subcellular location is the membrane. In terms of biological role, functions as a phosphatidylcholine:diacylglycerol cholinephosphotransferase that catalyzes the transfer of the phosphocholine headgroup from phosphatidylcholine (PC) to diacylglycerol, a major reaction for the transfer of 18:1 into phosphatidylcholine for desaturation and also for the reverse transfer of 18:2 and 18:3 into the triacylglycerols synthesis pathway. The protein is Phosphatidylcholine:diacylglycerol cholinephosphotransferase 2 of Arabidopsis thaliana (Mouse-ear cress).